A 64-amino-acid chain; its full sequence is UPF0434 protein MADE_1009415 (64 aa).

It belongs to the UPF0434 family.

This Alteromonas mediterranea (strain DSM 17117 / CIP 110805 / LMG 28347 / Deep ecotype) protein is UPF0434 protein MADE_1009415.